The sequence spans 197 residues: Xanthine phosphoribosyltransferase (197 aa).

2 residues coordinate xanthine: Leu-20 and Thr-27. 5-phospho-alpha-D-ribose 1-diphosphate is bound at residue 128–132; sequence ANGQA. Lys-156 is a binding site for xanthine.

Belongs to the purine/pyrimidine phosphoribosyltransferase family. Xpt subfamily. As to quaternary structure, homodimer.

The protein resides in the cytoplasm. It carries out the reaction XMP + diphosphate = xanthine + 5-phospho-alpha-D-ribose 1-diphosphate. It functions in the pathway purine metabolism; XMP biosynthesis via salvage pathway; XMP from xanthine: step 1/1. Converts the preformed base xanthine, a product of nucleic acid breakdown, to xanthosine 5'-monophosphate (XMP), so it can be reused for RNA or DNA synthesis. In Lactococcus lactis subsp. cremoris (strain SK11), this protein is Xanthine phosphoribosyltransferase.